A 447-amino-acid chain; its full sequence is N-succinylarginine dihydrolase (447 aa).

Substrate is bound by residues Ala19–Ser28, Asn110, and His137–Arg138. Glu174 is an active-site residue. Arg212 is a binding site for substrate. His248 is an active-site residue. Positions 250 and 359 each coordinate substrate. The active-site Nucleophile is Cys365.

Belongs to the succinylarginine dihydrolase family. In terms of assembly, homodimer.

It carries out the reaction N(2)-succinyl-L-arginine + 2 H2O + 2 H(+) = N(2)-succinyl-L-ornithine + 2 NH4(+) + CO2. It participates in amino-acid degradation; L-arginine degradation via AST pathway; L-glutamate and succinate from L-arginine: step 2/5. Catalyzes the hydrolysis of N(2)-succinylarginine into N(2)-succinylornithine, ammonia and CO(2). The sequence is that of N-succinylarginine dihydrolase from Escherichia coli O6:H1 (strain CFT073 / ATCC 700928 / UPEC).